Reading from the N-terminus, the 258-residue chain is Short-chain dehydrogenase/reductase FrzI (258 aa).

NADP(+) contacts are provided by isoleucine 21, asparagine 41, and asparagine 94. Catalysis depends on proton donor residues serine 143 and serine 144. Positions 157, 161, 191, and 193 each coordinate NADP(+). Tyrosine 157 serves as the catalytic Proton acceptor. Lysine 161 serves as the catalytic Lowers pKa of active site Tyr.

This sequence belongs to the short-chain dehydrogenases/reductases (SDR) family.

It carries out the reaction (1S,3S,6S,7S,8R)-7-hydroxy-6-[(4-methoxyphenyl)methyl]-3-(methylamino)-5-azatricyclo[6.3.1.0(1,5)]dodecan-9-one + NADPH + H(+) = (1S,3S,6S,7S,8S,9S)-6-[(4-methoxyphenyl)methyl]-3-(methylamino)-5-azatricyclo[6.3.1.0(1,5)]dodecane-7,9-diol + NADP(+). Its pathway is secondary metabolite biosynthesis. Its function is as follows. Short-chain dehydrogenase/reductase; part of the gene cluster that mediates the biosynthesis of the alkaloid (-)-FR901483, a potent immunosuppressant that shows efficacy in animal models and a probable inhibitor of purine nucleotide biosynthesis by targeting phosphoribosylpyrophosphate amidotransferase (PPAT). Within the pathway, FrzI catalyzes the formation of dephospho-(-)-FR901483 from the aza-tricyclic intermediate produced by FrzH. The biosynthesis of (-)-FR901483 starts with the condensation of two L-tyrosines to yield (S,S)-dityrosyl-piperazine. This process occurs in 3 steps with the non-canonical nonribosomal peptide synthetase FrzA catalyzing the reduction of L-tyrosine into L-tyrosinal, the spontaneous condensation of 2 L-tyrosinal units, and the subsequent reduction by the NmrA-like family domain-containing oxidoreductase FrzB. The cytochrome P450 monooxygenase FrzC then performs coupling between N10 and C1' to morph the piperazine into a 1,4-diazabicyclo[3.2.1]octane spiro-fused to a 2,5-cyclohexadienone. The dienone portion is further reduced to cyclohexanone by the flavin-dependent reductase FrzD. The methyltranserases (MTs) FrzE and FrzF are then involved in the methylation at the C10' amine and the C4 phenolic oxygen, respectively. The order of the two MTs appear to be interchangeable. Cleavage of the C9-N10' bond by the dioxygenase FrzG then leads to formation of a conjugated iminium. In addition to the oxidation of C9, an additional dehydrogenation between C7 and C8 can occur to give a likely shunt product. The next biosynthetic step is the intramolecular aldol condensation catalyzed by the newly identified aldolase FrzH to yield an aza-tricyclic product with the formation of a C9-C3' bond. The short-chain dehydrogenase/reductase FrzI then produces dephospho-(-)-FR901483 that is phosphorylated at C4'-OH into (-)-FR901483 by the phosphotransferase FrzJ. In Cladobotryum sp, this protein is Short-chain dehydrogenase/reductase FrzI.